Consider the following 318-residue polypeptide: Ubiquitin-like domain-containing CTD phosphatase 1 (318 aa).

The region spanning 3-81 (LPIIVKWGGQ…IMMMGTREES (79 aa)) is the Ubiquitin-like domain. At Lys117 the chain carries N6-acetyllysine. One can recognise an FCP1 homology domain in the interval 133 to 294 (PREGKKLLVL…VKLTQYLKEI (162 aa)). Residues Asp143, Asp145, and Asp253 each contribute to the Mg(2+) site.

Mg(2+) serves as cofactor.

The protein localises to the nucleus. It carries out the reaction O-phospho-L-seryl-[protein] + H2O = L-seryl-[protein] + phosphate. The catalysed reaction is O-phospho-L-threonyl-[protein] + H2O = L-threonyl-[protein] + phosphate. In terms of biological role, dephosphorylates 26S nuclear proteasomes, thereby decreasing their proteolytic activity. Recruited to the 19S regulatory particle of the 26S proteasome through its interaction with 19S component PSMD2/RPN1. Once recruited, dephosphorylates 19S component PSMC2/RPT1 which impairs PSMC2 ATPase activity and disrupts 26S proteasome assembly. Has also been reported to stimulate the proteolytic activity of the 26S proteasome. The sequence is that of Ubiquitin-like domain-containing CTD phosphatase 1 (Ublcp1) from Rattus norvegicus (Rat).